The primary structure comprises 83 residues: Exodeoxyribonuclease 7 small subunit (83 aa).

This sequence belongs to the XseB family. In terms of assembly, heterooligomer composed of large and small subunits.

Its subcellular location is the cytoplasm. It carries out the reaction Exonucleolytic cleavage in either 5'- to 3'- or 3'- to 5'-direction to yield nucleoside 5'-phosphates.. In terms of biological role, bidirectionally degrades single-stranded DNA into large acid-insoluble oligonucleotides, which are then degraded further into small acid-soluble oligonucleotides. In Bradyrhizobium sp. (strain BTAi1 / ATCC BAA-1182), this protein is Exodeoxyribonuclease 7 small subunit.